The chain runs to 3013 residues: DmX-like protein 1 (3013 aa).

WD repeat units follow at residues 108–145 (FLDS…TEDE), 164–204 (KTAS…RPAV), and 227–275 (AHPR…NDCF). A phosphoserine mark is found at serine 322, serine 420, serine 423, and serine 434. The disordered stretch occupies residues 418 to 442 (PSSEASVEDSIQADLKSDEELDDGV). Residues 474–514 (DHQIEVLLSEWSKNADMLFSIHPMDGSLLVWHVDWLDEYQP) form a WD 4 repeat. Serine 572 bears the Phosphoserine mark. WD repeat units lie at residues 578–619 (AHSK…ESAF) and 842–893 (KKRL…TPVS). Phosphoserine occurs at positions 916 and 922. WD repeat units follow at residues 970–1008 (HLSS…GESA), 1145–1193 (EDGS…PLSK), and 1208–1248 (GAPP…EPVI). 4 positions are modified to phosphoserine: serine 1829, serine 1896, serine 1903, and serine 1965. Disordered regions lie at residues 2364–2406 (GQAN…PPAV) and 2431–2462 (QSRA…GLQL). Residues 2385-2398 (SKVSARESPVSSSS) are compositionally biased toward low complexity. Residues 2437–2455 (DSEESLESDDEEEEDDDDA) show a composition bias toward acidic residues. WD repeat units follow at residues 2728-2769 (KAIN…TCFR), 2771-2810 (GGNS…CPVT), 2822-2864 (CHNK…ANSL), 2870-2909 (CHDS…QRQL), 2912-2951 (SHDS…LLHT), and 2964-3002 (NIGT…SPLN).

This chain is DmX-like protein 1 (Dmxl1), found in Mus musculus (Mouse).